The sequence spans 290 residues: 33 kDa chaperonin (290 aa).

2 disulfide bridges follow: Cys231–Cys233 and Cys263–Cys266.

The protein belongs to the HSP33 family. Post-translationally, under oxidizing conditions two disulfide bonds are formed involving the reactive cysteines. Under reducing conditions zinc is bound to the reactive cysteines and the protein is inactive.

The protein resides in the cytoplasm. In terms of biological role, redox regulated molecular chaperone. Protects both thermally unfolding and oxidatively damaged proteins from irreversible aggregation. Plays an important role in the bacterial defense system toward oxidative stress. In Thermotoga petrophila (strain ATCC BAA-488 / DSM 13995 / JCM 10881 / RKU-1), this protein is 33 kDa chaperonin.